Reading from the N-terminus, the 86-residue chain is Protein Tat (86 aa).

Residues 1–24 are interaction with human CREBBP; that stretch reads MEPVDPRLEPWKHPGSQPKTACTN. Positions 1 to 48 are transactivation; that stretch reads MEPVDPRLEPWKHPGSQPKTACTNCYCKKCCFHCQVCFITKALGISYG. Zn(2+) is bound by residues Cys22, Cys25, and Cys27. Positions 22–37 are cysteine-rich; it reads CTNCYCKKCCFHCQVC. At Lys28 the chain carries N6-acetyllysine; by host PCAF. Cys30, His33, Cys34, and Cys37 together coordinate Zn(2+). The interval 38-48 is core; sequence FITKALGISYG. Basic residues predominate over residues 48–59; the sequence is GRKKRRQRRRAH. The segment at 48–86 is disordered; sequence GRKKRRQRRRAHQNSQTHQASLSKQPTSQPRGDPTGPKE. The Nuclear localization signal, RNA-binding (TAR), and protein transduction signature appears at 49–57; the sequence is RKKRRQRRR. The interval 49-86 is interaction with the host capping enzyme RNGTT; it reads RKKRRQRRRAHQNSQTHQASLSKQPTSQPRGDPTGPKE. Lys50 and Lys51 each carry N6-acetyllysine; by host EP300 and GCN5L2. Arg52 and Arg53 each carry asymmetric dimethylarginine; by host PRMT6. Residues 60–77 show a composition bias toward polar residues; it reads QNSQTHQASLSKQPTSQP. Lys71 is covalently cross-linked (Glycyl lysine isopeptide (Lys-Gly) (interchain with G-Cter in ubiquitin)). A Cell attachment site motif is present at residues 78–80; the sequence is RGD.

This sequence belongs to the lentiviruses Tat family. As to quaternary structure, interacts with host CCNT1. Associates with the P-TEFb complex composed at least of Tat, P-TEFb (CDK9 and CCNT1), TAR RNA, RNA Pol II. Recruits the HATs CREBBP, TAF1/TFIID, EP300, PCAF and GCN5L2. Interacts with host KAT5/Tip60; this interaction targets the latter to degradation. Interacts with the host deacetylase SIRT1. Interacts with host capping enzyme RNGTT; this interaction stimulates RNGTT. Binds to host KDR, and to the host integrins ITGAV/ITGB3 and ITGA5/ITGB1. Interacts with host KPNB1/importin beta-1 without previous binding to KPNA1/importin alpha-1. Interacts with EIF2AK2. Interacts with host nucleosome assembly protein NAP1L1; this interaction may be required for the transport of Tat within the nucleus, since the two proteins interact at the nuclear rim. Interacts with host C1QBP/SF2P32; this interaction involves lysine-acetylated Tat. Interacts with the host chemokine receptors CCR2, CCR3 and CXCR4. Interacts with host DPP4/CD26; this interaction may trigger an anti-proliferative effect. Interacts with host LDLR. Interacts with the host extracellular matrix metalloproteinase MMP1. Interacts with host PRMT6; this interaction mediates Tat's methylation. Interacts with, and is ubiquitinated by MDM2/Hdm2. Interacts with host PSMC3 and HTATIP2. Interacts with STAB1; this interaction may overcome SATB1-mediated repression of IL2 and IL2RA (interleukin) in T cells by binding to the same domain than HDAC1. Interacts (when acetylated) with human CDK13, thereby increasing HIV-1 mRNA splicing and promoting the production of the doubly spliced HIV-1 protein Nef. Interacts with host TBP; this interaction modulates the activity of transcriptional pre-initiation complex. Interacts with host RELA. Interacts with host PLSCR1; this interaction negatively regulates Tat transactivation activity by altering its subcellular distribution. Asymmetrical arginine methylation by host PRMT6 seems to diminish the transactivation capacity of Tat and affects the interaction with host CCNT1. In terms of processing, acetylation by EP300, CREBBP, GCN5L2/GCN5 and PCAF regulates the transactivation activity of Tat. EP300-mediated acetylation of Lys-50 promotes dissociation of Tat from the TAR RNA through the competitive binding to PCAF's bromodomain. In addition, the non-acetylated Tat's N-terminus can also interact with PCAF. PCAF-mediated acetylation of Lys-28 enhances Tat's binding to CCNT1. Lys-50 is deacetylated by SIRT1. Post-translationally, polyubiquitination by host MDM2 does not target Tat to degradation, but activates its transactivation function and fosters interaction with CCNT1 and TAR RNA. Phosphorylated by EIF2AK2 on serine and threonine residues adjacent to the basic region important for TAR RNA binding and function. Phosphorylation of Tat by EIF2AK2 is dependent on the prior activation of EIF2AK2 by dsRNA.

Its subcellular location is the host nucleus. The protein localises to the host nucleolus. It localises to the host cytoplasm. It is found in the secreted. Transcriptional activator that increases RNA Pol II processivity, thereby increasing the level of full-length viral transcripts. Recognizes a hairpin structure at the 5'-LTR of the nascent viral mRNAs referred to as the transactivation responsive RNA element (TAR) and recruits the cyclin T1-CDK9 complex (P-TEFb complex) that will in turn hyperphosphorylate the RNA polymerase II to allow efficient elongation. The CDK9 component of P-TEFb and other Tat-activated kinases hyperphosphorylate the C-terminus of RNA Pol II that becomes stabilized and much more processive. Other factors such as HTATSF1/Tat-SF1, SUPT5H/SPT5, and HTATIP2 are also important for Tat's function. Besides its effect on RNA Pol II processivity, Tat induces chromatin remodeling of proviral genes by recruiting the histone acetyltransferases (HATs) CREBBP, EP300 and PCAF to the chromatin. This also contributes to the increase in proviral transcription rate, especially when the provirus integrates in transcriptionally silent region of the host genome. To ensure maximal activation of the LTR, Tat mediates nuclear translocation of NF-kappa-B by interacting with host RELA. Through its interaction with host TBP, Tat may also modulate transcription initiation. Tat can reactivate a latently infected cell by penetrating in it and transactivating its LTR promoter. In the cytoplasm, Tat is thought to act as a translational activator of HIV-1 mRNAs. Functionally, extracellular circulating Tat can be endocytosed by surrounding uninfected cells via the binding to several surface receptors such as CD26, CXCR4, heparan sulfate proteoglycans (HSPG) or LDLR. Neurons are rarely infected, but they internalize Tat via their LDLR. Through its interaction with nuclear HATs, Tat is potentially able to control the acetylation-dependent cellular gene expression. Modulates the expression of many cellular genes involved in cell survival, proliferation or in coding for cytokines or cytokine receptors. Tat plays a role in T-cell and neurons apoptosis. Tat induced neurotoxicity and apoptosis probably contribute to neuroAIDS. Circulating Tat also acts as a chemokine-like and/or growth factor-like molecule that binds to specific receptors on the surface of the cells, affecting many cellular pathways. In the vascular system, Tat binds to ITGAV/ITGB3 and ITGA5/ITGB1 integrins dimers at the surface of endothelial cells and competes with bFGF for heparin-binding sites, leading to an excess of soluble bFGF. The chain is Protein Tat from Homo sapiens (Human).